Consider the following 315-residue polypeptide: Porphobilinogen deaminase (315 aa).

Position 238 is an S-(dipyrrolylmethanemethyl)cysteine (C238).

Belongs to the HMBS family. As to quaternary structure, monomer. Requires dipyrromethane as cofactor.

It catalyses the reaction 4 porphobilinogen + H2O = hydroxymethylbilane + 4 NH4(+). The protein operates within porphyrin-containing compound metabolism; protoporphyrin-IX biosynthesis; coproporphyrinogen-III from 5-aminolevulinate: step 2/4. Tetrapolymerization of the monopyrrole PBG into the hydroxymethylbilane pre-uroporphyrinogen in several discrete steps. This Albidiferax ferrireducens (strain ATCC BAA-621 / DSM 15236 / T118) (Rhodoferax ferrireducens) protein is Porphobilinogen deaminase.